Here is a 550-residue protein sequence, read N- to C-terminus: Homeobox and leucine zipper protein Homez (550 aa).

Residues 1-10 (MVRGWEPPPG) show a composition bias toward pro residues. The interval 1–36 (MVRGWEPPPGLDCAISEGHKSEGTMPPNKEASGLSS) is disordered. Residues 55 to 114 (WTQAAQTSELDSNEHLLKTFSYFPYPSLADIALLCLRYGLQMEKVKTWFMAQRLRCGISW) constitute a DNA-binding region (homeobox 1). The interval 168–199 (GPPTLSKPTQTKGLKVEPEEPSQMPPLPQSHQ) is disordered. Glycyl lysine isopeptide (Lys-Gly) (interchain with G-Cter in SUMO2) cross-links involve residues Lys-182, Lys-200, and Lys-202. Positions 223-265 (LQSSGLSKEQAGRGPNQSHGIGTASWNHSTTVPQPQARDKPPP) are disordered. The span at 237 to 256 (PNQSHGIGTASWNHSTTVPQ) shows a compositional bias: polar residues. Ser-351 is modified (phosphoserine). 2 DNA-binding regions (homeobox) span residues 355-415 (QRQR…KHGQ) and 451-510 (TPPL…AEVV). The short motif at 358-363 (RKTKRK) is the Nuclear localization signal element. Disordered stretches follow at residues 424-465 (VPGA…DIQP) and 512-550 (CLDE…IIQD). Residue Thr-451 is modified to Phosphothreonine. The span at 452-463 (PPLPIPPPPPDI) shows a compositional bias: pro residues. Acidic residues predominate over residues 513–550 (LDEEEEEEEEELPEDDEEEEEEEEEDDDDDDDDVIIQD).

As to quaternary structure, homodimer or heterodimer (Potential). Interacts with HOXC8. Ubiquitous. Strongly expressed in adult testis and kidney as well as fetal lung and kidney.

The protein localises to the nucleus. Functionally, may function as a transcriptional regulator. This Homo sapiens (Human) protein is Homeobox and leucine zipper protein Homez (HOMEZ).